The following is a 376-amino-acid chain: Phosphoserine aminotransferase (376 aa).

Arginine 46 provides a ligand contact to L-glutamate. Pyridoxal 5'-phosphate is bound by residues 80-81 (AT), phenylalanine 104, threonine 150, aspartate 172, and glutamine 195. Position 196 is an N6-(pyridoxal phosphate)lysine (lysine 196). Residue 247 to 248 (NT) coordinates pyridoxal 5'-phosphate.

This sequence belongs to the class-V pyridoxal-phosphate-dependent aminotransferase family. SerC subfamily. In terms of assembly, homodimer. Pyridoxal 5'-phosphate is required as a cofactor.

It localises to the cytoplasm. The catalysed reaction is O-phospho-L-serine + 2-oxoglutarate = 3-phosphooxypyruvate + L-glutamate. It carries out the reaction 4-(phosphooxy)-L-threonine + 2-oxoglutarate = (R)-3-hydroxy-2-oxo-4-phosphooxybutanoate + L-glutamate. Its pathway is amino-acid biosynthesis; L-serine biosynthesis; L-serine from 3-phospho-D-glycerate: step 2/3. The protein operates within cofactor biosynthesis; pyridoxine 5'-phosphate biosynthesis; pyridoxine 5'-phosphate from D-erythrose 4-phosphate: step 3/5. Catalyzes the reversible conversion of 3-phosphohydroxypyruvate to phosphoserine and of 3-hydroxy-2-oxo-4-phosphonooxybutanoate to phosphohydroxythreonine. The chain is Phosphoserine aminotransferase from Corynebacterium glutamicum (strain R).